Here is a 380-residue protein sequence, read N- to C-terminus: tRNA-specific 2-thiouridylase MnmA (380 aa).

Residues 10–17 (AMSGGVDS) and leucine 36 each bind ATP. Cysteine 106 acts as the Nucleophile in catalysis. The cysteines at positions 106 and 202 are disulfide-linked. Glycine 130 is a binding site for ATP. Residues 152 to 154 (KNQ) form an interaction with tRNA region. Residue cysteine 202 is the Cysteine persulfide intermediate of the active site. Residues 308–309 (RY) are interaction with tRNA.

This sequence belongs to the MnmA/TRMU family.

The protein localises to the cytoplasm. The enzyme catalyses S-sulfanyl-L-cysteinyl-[protein] + uridine(34) in tRNA + AH2 + ATP = 2-thiouridine(34) in tRNA + L-cysteinyl-[protein] + A + AMP + diphosphate + H(+). In terms of biological role, catalyzes the 2-thiolation of uridine at the wobble position (U34) of tRNA, leading to the formation of s(2)U34. The protein is tRNA-specific 2-thiouridylase MnmA of Leptospira biflexa serovar Patoc (strain Patoc 1 / Ames).